A 420-amino-acid polypeptide reads, in one-letter code: Mannose-1-phosphate guanylyltransferase regulatory subunit alpha (420 aa).

Residues 2–251 (LKAVILIGGP…DGIWSQIKSA (250 aa)) form a substrate-binding domain region. GDP-alpha-D-mannose contacts are provided by E85 and Q247. A hexapeptide repeat domain region spans residues 273–420 (LAKHTPGGPR…SRSFTNQIIL (148 aa)). The segment at 356-384 (TPNDPNPNDPRARMDSESLFKDGKLLPAI) is C-loop.

This sequence belongs to the transferase hexapeptide repeat family. Component of the GMPPA-GMPPB mannose-1-phosphate guanylyltransferase complex composed of 4 GMPPA subunits and 8 GMPPB subunits; the complex is organized into three layers, a central layer made up of 2 GMPPA dimers sandwiched between two layers each made up of 2 GMPPB dimers.

It is found in the cytoplasm. In terms of biological role, regulatory subunit of the GMPPA-GMPPB mannose-1-phosphate guanylyltransferase complex; reduces the catalytic activity of GMPPB when part of the complex. Mediates allosteric feedback inhibition of GMPPB catalytic activity upon binding GDP-alpha-D-mannose. Together with GMPPB regulates GDP-alpha-D-mannose levels. The polypeptide is Mannose-1-phosphate guanylyltransferase regulatory subunit alpha (GMPPA) (Papio anubis (Olive baboon)).